The following is a 351-amino-acid chain: uncharacterized protein (351 aa).

The signal sequence occupies residues 1 to 27 (MKNKKRVLIASSLSCAILLLSAATTQA). The segment at 29–71 (SAHKDSQDQNKKEHVDKSQQKDKRNVTNKDKNSTVPDDIGKNG) is disordered. Residues 30-60 (AHKDSQDQNKKEHVDKSQQKDKRNVTNKDKN) are compositionally biased toward basic and acidic residues.

It belongs to the aerolysin family.

This is an uncharacterized protein from Staphylococcus aureus (strain Mu50 / ATCC 700699).